A 644-amino-acid polypeptide reads, in one-letter code: Sodium/hydrogen exchanger 9 (644 aa).

Residues 1–20 (MERQRRFMSEKDEYQFQHQG) are Lumenal-facing. A helical transmembrane segment spans residues 21-41 (AVELLVFNFLLILTILTIWLF). Residues 42–45 (KNHR) are Cytoplasmic-facing. Residues 46-66 (FRFLHETGGAMVYGLIMGLIL) form a helical membrane-spanning segment. The Lumenal segment spans residues 67-126 (RYATAPTDIESGTVYDCGKLAFSPSTLLINITDQVYEYKYKREISQHNINPHLGNAILEK). Residues 127-147 (MTFDPEIFFNVLLPPIIFHAG) traverse the membrane as a helical segment. Residues 148 to 164 (YSLKKRHFFQNLGSILT) lie on the Cytoplasmic side of the membrane. A helical membrane pass occupies residues 165–185 (YAFLGTAISCIVIGLIMYGFV). Over 186 to 203 (KAMVYAGQLKNGDFHFTD) the chain is Lumenal. The chain crosses the membrane as a helical span at residues 204 to 224 (CLFFGSLMSATDPVTVLAIFH). Over 225-235 (ELHVDPDLYTL) the chain is Cytoplasmic. Residues 236–256 (LFGESVLNDAVAIVLTYSISI) traverse the membrane as a helical segment. Residues 257–277 (YSPKENPNAFDAAAFFQSVGN) are Lumenal-facing. Residues 278-298 (FLGIFAGSFAMGSAYAVVTAL) form a helical membrane-spanning segment. Topologically, residues 299 to 301 (LTK) are cytoplasmic. A run of 2 helical transmembrane segments spans residues 302-322 (FTKL…LSWS) and 323-343 (AFLS…FCGV). Topologically, residues 344-364 (TQAHYTYNNLSLDSKMRTKQL) are cytoplasmic. Residues 365–385 (FEFMNFLAENVIFCYMGLALF) form a helical membrane-spanning segment. A topological domain (lumenal) is located at residue threonine 386. Residues 387 to 407 (FQNHIFNALFILGAFLAIFVA) traverse the membrane as a helical segment. Topologically, residues 408–429 (RACNIYPLSFLLNLGRKHKIPW) are cytoplasmic. Residues 430 to 450 (NFQHMMMFSGLRGAIAFALAI) form a helical membrane-spanning segment. The Lumenal segment spans residues 451 to 465 (RDTESQPKQMMFSTT). A helical membrane pass occupies residues 466 to 486 (LLLVFFTVWVFGGGTTPMLTW). Topologically, residues 487–644 (LQIRVGVDLD…EQTPGQSQLN (158 aa)) are cytoplasmic. A disordered region spans residues 593–622 (QAASPCSPPTRLGLDQKAAPQTPGKENIYE).

The protein belongs to the monovalent cation:proton antiporter 1 (CPA1) transporter (TC 2.A.36) family. In terms of assembly, homodimer; phosphatidylinositol-4,5-bisphosphate (PIP2) and phosphatidylinositol 3,4,5-trisphosphate (PIP3) could be involved in the dimer stabilization. Interacts (via the C-terminus) with RACK1. Interacts with CHP1.

It is found in the late endosome membrane. Its subcellular location is the early endosome membrane. The protein resides in the recycling endosome membrane. The protein localises to the cell membrane. It localises to the cytoplasmic vesicle. It is found in the phagosome membrane. It carries out the reaction Na(+)(in) + H(+)(out) = Na(+)(out) + H(+)(in). The enzyme catalyses K(+)(in) + H(+)(out) = K(+)(out) + H(+)(in). Its function is as follows. Endosomal Na(+), K(+)/H(+) antiporter. Mediates the electroneutral exchange of endosomal luminal H(+) for a cytosolic Na(+) or K(+). By facilitating proton efflux, SLC9A9 counteracts the acidity generated by vacuolar (V)-ATPase, thereby limiting luminal acidification. Regulates organellar pH and consequently, endosome maturation and endocytic trafficking of plasma membrane receptors and neurotransporters. Promotes the recycling of transferrin receptors back to the cell surface to facilitate additional iron uptake in the brain. Regulates synaptic transmission by regulating the luminal pH of axonal endosomes. Regulates phagosome lumenal pH, thus affecting phagosome maturation, and consequently, microbicidal activity in macrophages. Can also be active at the cell surface of specialized cells, e.g., in the inner ear hair bundles uses the high K(+) of the endolymph to regulate intracelular pH. This chain is Sodium/hydrogen exchanger 9 (SLC9A9), found in Equus caballus (Horse).